Here is a 953-residue protein sequence, read N- to C-terminus: MSKKRLHEIAKEIGKSSKEVVEHAKYLGLDVKSHASSVEEADAKKIISSFSKASKPDVTASQTVKPKEVAQPSVTVVKETGSEHVEKTQVSKPKSRNFKAEREARAKEQAARKQANGSSHRSQERRGGYRQPNNHQTNEQGDKRITHRSQGDTNDKRIERKASNVSPRHDNHQLVGDRNRSFAKENHKNGRFTNQKKQGRQEPQSKSPKIDFKARAAALKAEQNAEYSRQSETRFRAQQEAKRLAELARQEAKEAALKAQAEEMSHREAALKSIEEAETKLKSSNISAKSTADNRRKKQARPEKNRELTHHSQEGQKKNKKSWNSQNQVRNQKNSNWNKNKKTKKGKNAKNTNTAPKPVTERKFHELPKEFEYTEGMTVAEIAKRIKREPAEIVKKLFMMGVMATQNQSLDGDTIELLMVDYGIEAKAKVEVDDADIERFFEDENYLNPENIVERAPVVTIMGHVDHGKTTLLDTLRNSRVATGEAGGITQHIGAYQIEEAGKKITFLDTPGHAAFTSMRARGASVTDITILIVAADDGVMPQTIEAINHSKAAGVPIIVAINKIDKPGANPERVIAELAEYGIISTAWGGECEFVEISAKFNKNIDELLETVLLVAEVEELKADPTVRAIGTVIEARLDKGKGAIATLLVQQGTLHVQDPIVVGNTFGRVRAMVNDLGRRVKSAEPSTPVSITGLNETPMAGDHFAVYADEKAARAAGEERSKRALLKQRQNTQRVSLDNLFDTLKAGEIKTVNVIIKADVQGSVEALAASLVKIEVEGVRVNVVHSAVGAINESDVTLAEASNAVIIGFNVRPTPQARQQADTDDVEIRLHSIIYKVIEEVEEAMKGKLDPVYQEKILGEAIIRETFKVSKVGTIGGFMVINGKVTRDSSVRVIRDSVVIFDGKLASLKHYKDDVKEVGNAQEGGLMIENFNDLKVDDTIEAYIMEEIVRK.

2 disordered regions span residues 48 to 212 and 279 to 367; these read SSFS…KIDF and TKLK…FHEL. 3 stretches are compositionally biased toward basic and acidic residues: residues 80 to 89, 98 to 111, and 140 to 188; these read TGSEHVEKTQ, FKAE…EQAA, and QGDK…ENHK. 2 stretches are compositionally biased toward polar residues: residues 191–207 and 282–291; these read RFTN…QSKS and KSSNISAKST. The span at 300–317 shows a compositional bias: basic and acidic residues; the sequence is ARPEKNRELTHHSQEGQK. Residues 322–338 are compositionally biased toward low complexity; that stretch reads SWNSQNQVRNQKNSNWN. Over residues 339–348 the composition is skewed to basic residues; sequence KNKKTKKGKN. The tr-type G domain occupies 454–623; the sequence is ERAPVVTIMG…LLVAEVEELK (170 aa). The G1 stretch occupies residues 463-470; the sequence is GHVDHGKT. 463 to 470 serves as a coordination point for GTP; sequence GHVDHGKT. The G2 stretch occupies residues 488–492; sequence GITQH. A G3 region spans residues 509–512; that stretch reads DTPG. GTP contacts are provided by residues 509–513 and 563–566; these read DTPGH and NKID. Positions 563 to 566 are G4; the sequence is NKID. Residues 599–601 form a G5 region; the sequence is SAK.

This sequence belongs to the TRAFAC class translation factor GTPase superfamily. Classic translation factor GTPase family. IF-2 subfamily.

The protein resides in the cytoplasm. Its function is as follows. One of the essential components for the initiation of protein synthesis. Protects formylmethionyl-tRNA from spontaneous hydrolysis and promotes its binding to the 30S ribosomal subunits. Also involved in the hydrolysis of GTP during the formation of the 70S ribosomal complex. The chain is Translation initiation factor IF-2 from Streptococcus pyogenes serotype M3 (strain ATCC BAA-595 / MGAS315).